Here is a 368-residue protein sequence, read N- to C-terminus: 4-hydroxy-3-methylbut-2-en-1-yl diphosphate synthase (flavodoxin) (368 aa).

[4Fe-4S] cluster-binding residues include C271, C274, C306, and E313.

It belongs to the IspG family. The cofactor is [4Fe-4S] cluster.

The catalysed reaction is (2E)-4-hydroxy-3-methylbut-2-enyl diphosphate + oxidized [flavodoxin] + H2O + 2 H(+) = 2-C-methyl-D-erythritol 2,4-cyclic diphosphate + reduced [flavodoxin]. Its pathway is isoprenoid biosynthesis; isopentenyl diphosphate biosynthesis via DXP pathway; isopentenyl diphosphate from 1-deoxy-D-xylulose 5-phosphate: step 5/6. Converts 2C-methyl-D-erythritol 2,4-cyclodiphosphate (ME-2,4cPP) into 1-hydroxy-2-methyl-2-(E)-butenyl 4-diphosphate. This Haemophilus influenzae (strain ATCC 51907 / DSM 11121 / KW20 / Rd) protein is 4-hydroxy-3-methylbut-2-en-1-yl diphosphate synthase (flavodoxin).